Consider the following 157-residue polypeptide: Phosphopantetheine adenylyltransferase (157 aa).

Thr-8 serves as a coordination point for substrate. Residues Thr-8 to Phe-9 and His-16 contribute to the ATP site. Lys-40, Thr-72, and Arg-86 together coordinate substrate. ATP-binding positions include Gly-87–Arg-89, Glu-97, and Tyr-122–Ser-128.

The protein belongs to the bacterial CoaD family. As to quaternary structure, homohexamer. It depends on Mg(2+) as a cofactor.

Its subcellular location is the cytoplasm. It catalyses the reaction (R)-4'-phosphopantetheine + ATP + H(+) = 3'-dephospho-CoA + diphosphate. It participates in cofactor biosynthesis; coenzyme A biosynthesis; CoA from (R)-pantothenate: step 4/5. Its function is as follows. Reversibly transfers an adenylyl group from ATP to 4'-phosphopantetheine, yielding dephospho-CoA (dPCoA) and pyrophosphate. The sequence is that of Phosphopantetheine adenylyltransferase from Prochlorococcus marinus (strain AS9601).